We begin with the raw amino-acid sequence, 599 residues long: Zinc metalloproteinase dpy-31 (599 aa).

An N-terminal signal peptide occupies residues 1–22; the sequence is MALLKPFLSRTFSSFFATITGG. Positions 23–211 are excised as a propeptide; the sequence is RNLIDSIEEL…IQHGRRTKRK (189 aa). The 200-residue stretch at 211–410 folds into the Peptidase M12A domain; it reads KFIRSELRRW…IRLMNVIYCS (200 aa). Asn251 is a glycosylation site (N-linked (GlcNAc...) asparagine). Cystine bridges form between Cys254–Cys409, Cys277–Cys298, Cys413–Cys433, Cys435–Cys444, and Cys455–Cys483. Zn(2+) is bound at residue His306. Glu307 is a catalytic residue. The Zn(2+) site is built by His310 and His316. The EGF-like domain maps to 405 to 445; the sequence is NVIYCSDSCAQKLPCQRGGYTDPRRCGRCRCPDGFTGKLCE. A CUB domain is found at 455 to 571; the sequence is CGGRIELTSS…KGFQAQVRAL (117 aa). An N-linked (GlcNAc...) asparagine glycan is attached at Asn522.

Zn(2+) is required as a cofactor.

It is found in the secreted. Its activity is regulated as follows. Inhibited by marimastat and tripeptide hydroxamic acids. Functionally, metalloprotease which cleaves the carboxyl terminus of procollagens to mature collagens. Probably involved in cuticular collagen maturation. This is Zinc metalloproteinase dpy-31 from Brugia malayi (Filarial nematode worm).